Here is a 666-residue protein sequence, read N- to C-terminus: Neurexin-2-beta (666 aa).

The span at 1-10 shows a compositional bias: gly residues; it reads MPPGGSGPGG. The interval 1 to 30 is disordered; it reads MPPGGSGPGGCPRRPPALAGPLPPPPPPPP. Residues 1–50 form the signal peptide; the sequence is MPPGGSGPGGCPRRPPALAGPLPPPPPPPPPPLLPLLPLLLLLLLGAAEG. The segment covering 21–30 has biased composition (pro residues); it reads PLPPPPPPPP. The Extracellular portion of the chain corresponds to 51–590; the sequence is ARVSSSLSTT…EVIRESSSTT (540 aa). The region spanning 91-299 is the Laminin G-like domain; it reads TTYIFGKGGA…HLRLVGEGPS (209 aa). Asp-143 and Val-160 together coordinate Ca(2+). Asn-190 carries N-linked (GlcNAc...) asparagine glycosylation. Ca(2+) contacts are provided by Ile-242 and Asn-244. The tract at residues 327-346 is disordered; sequence ATTTTRRGRSPTLRDSTTQN. The O-linked (Xyl...) (heparan sulfate) serine glycan is linked to Ser-354. Disordered stretches follow at residues 412 to 443 and 479 to 580; these read ATQD…CEEP and TLLS…PGAV. A helical transmembrane segment spans residues 591-611; it reads GMVVGIVAAAALCILILLYAM. Residues 612 to 666 lie on the Cytoplasmic side of the membrane; the sequence is YKYRNRDEGSYQVDQSRNYISNSAQSNGAVVKEKAPAAPKTPSKAKKNKDKEYYV. Residues 633–666 are disordered; sequence NSAQSNGAVVKEKAPAAPKTPSKAKKNKDKEYYV.

This sequence belongs to the neurexin family. Interacts (via cytoplasmic C-terminal region) with CASK. Specific isoforms bind alpha-dystroglycan and neuroligins NLGN1, NLGN2 and NLGN3. Interacts with CBLN1, CBLN2 and, less avidly, with CBLN4. Interacts with CLSTN3. Post-translationally, O-glycosylated; contains heparan sulfate. Heparan sulfate attachment is required for synapse development by mediating interactions with neuroligins.

Its subcellular location is the presynaptic cell membrane. In terms of biological role, neuronal cell surface protein that may be involved in cell recognition and cell adhesion. In Homo sapiens (Human), this protein is Neurexin-2-beta (NRXN2).